Here is a 469-residue protein sequence, read N- to C-terminus: Uronate isomerase (469 aa).

This sequence belongs to the metallo-dependent hydrolases superfamily. Uronate isomerase family.

It catalyses the reaction D-glucuronate = D-fructuronate. The catalysed reaction is aldehydo-D-galacturonate = keto-D-tagaturonate. Its pathway is carbohydrate metabolism; pentose and glucuronate interconversion. The sequence is that of Uronate isomerase from Yersinia enterocolitica serotype O:8 / biotype 1B (strain NCTC 13174 / 8081).